The primary structure comprises 74 residues: UPF0346 protein SE_1114 (74 aa).

This sequence belongs to the UPF0346 family.

This Staphylococcus epidermidis (strain ATCC 12228 / FDA PCI 1200) protein is UPF0346 protein SE_1114.